The primary structure comprises 562 residues: NRAMP-like transporter smf-1 (562 aa).

Over 1 to 55 the chain is Cytoplasmic; it reads MASSNNDGPIEPEAEPWRITQNDHLEQDLLEEDAESQERVDIPVDDVEKAFSFKK. A helical membrane pass occupies residues 56 to 76; the sequence is LWAFTGPGFLMSIAYLDPGNI. The Extracellular segment spans residues 77–83; it reads ESDLQSG. A helical membrane pass occupies residues 84-104; the sequence is AQAAYKLLWVLLSAHIIGMLL. The Cytoplasmic portion of the chain corresponds to 105–140; that stretch reads QRMSARLGVVSGKHMAEVAYQFYPRLPRIILWLMIE. Residues 141–161 traverse the membrane as a helical segment; that stretch reads IAIVCSDMQEVIGTAIAIFLL. The Extracellular portion of the chain corresponds to 162–164; that stretch reads SKG. Residues 165 to 185 traverse the membrane as a helical segment; the sequence is FVPLYVGVFITILDTFTFLLI. Residues 186–194 are Cytoplasmic-facing; the sequence is DRYGIRKLE. A helical transmembrane segment spans residues 195–215; it reads LIFGFLILTMTVSFGYEFVVV. The Extracellular segment spans residues 216 to 241; it reads KPPIGEVISGMVVPWCAGCGKGEFMQ. The chain crosses the membrane as a helical span at residues 242–262; that stretch reads AISVVGAVIMPHNLYLHSALV. The Cytoplasmic portion of the chain corresponds to 263 to 287; sequence KSRRVDRKDRRRVAEANKYFTLESA. A helical membrane pass occupies residues 288 to 308; the sequence is IALFLSFFINLFVVAVFAHGL. Residues 309-347 are Extracellular-facing; it reads YQKTNADVREMCIARHDIPDADIFPNNTEPVEVDIYKGG. The N-linked (GlcNAc...) asparagine glycan is linked to N334. Residues 348–368 traverse the membrane as a helical segment; the sequence is IYLGCQFGAIAMFIWGIGIFA. Topologically, residues 369 to 398 are cytoplasmic; the sequence is AGQSSTMTGTYTGQFVMEGFVKIEWPKWKR. The helical transmembrane segment at 399–419 threads the bilayer; that stretch reads VLITRAIAITPTLVLTFYSQG. Over 420 to 428 the chain is Extracellular; sequence VQNLTGMND. The N-linked (GlcNAc...) asparagine glycan is linked to N422. Residues 429–449 traverse the membrane as a helical segment; it reads FLNCVQMIQLPFALIPIITFT. The Cytoplasmic portion of the chain corresponds to 450–462; that stretch reads SSRKIMHDFRSSK. A helical membrane pass occupies residues 463–483; that stretch reads VFQIFALITSALILSINVYFI. At 484-496 the chain is on the extracellular side; that stretch reads SDYVFSRLGSEWY. The chain crosses the membrane as a helical span at residues 497–517; sequence IIMVLAPITFAYVLFVLYLAL. Residues 518 to 562 lie on the Cytoplasmic side of the membrane; sequence YCLVSCEIIPDTVSIRGFSFNKSYENDAPWLAVDSSAVHDNAGYQ.

It belongs to the NRAMP family. Expressed in dopaminergic neurons (at protein level). Expressed predominantly in anterior and posterior intestine, rectal gland cell, H-shaped excretory cell, vulva cells, proximal uterus and spermatheca in adults. Weakly expressed in hyp7 hypodermis, pharyngeal muscles and some anterior sensory, ring and posterior head neurons in adults. Expressed in the anchor cell at the larval stage.

The protein resides in the apical cell membrane. It localises to the cytoplasmic vesicle membrane. Its function is as follows. Probable divalent metal ion transporter which regulates Mn(2+) uptake. In Caenorhabditis elegans, this protein is NRAMP-like transporter smf-1 (smf-1).